Here is a 198-residue protein sequence, read N- to C-terminus: Nucleoid occlusion factor SlmA (198 aa).

The HTH tetR-type domain occupies 10-70 (NRREEILQSL…SLIEFIEDSL (61 aa)). The H-T-H motif DNA-binding region spans 33–52 (TTAKLAASVGVSEAALYRHF). A coiled-coil region spans residues 117 to 144 (EQDRLQGRINQLFERIEAQLRQVLREKR).

Belongs to the nucleoid occlusion factor SlmA family. In terms of assembly, homodimer. Interacts with FtsZ.

Its subcellular location is the cytoplasm. The protein resides in the nucleoid. Its function is as follows. Required for nucleoid occlusion (NO) phenomenon, which prevents Z-ring formation and cell division over the nucleoid. Acts as a DNA-associated cell division inhibitor that binds simultaneously chromosomal DNA and FtsZ, and disrupts the assembly of FtsZ polymers. SlmA-DNA-binding sequences (SBS) are dispersed on non-Ter regions of the chromosome, preventing FtsZ polymerization at these regions. The sequence is that of Nucleoid occlusion factor SlmA from Salmonella agona (strain SL483).